The sequence spans 265 residues: Mlc titration factor A (265 aa).

Zn(2+) is bound by residues histidine 111, histidine 148, histidine 152, and glutamate 211.

It belongs to the MtfA family. In terms of assembly, interacts with Mlc. Zn(2+) serves as cofactor.

It is found in the cytoplasm. Its function is as follows. Involved in the modulation of the activity of the glucose-phosphotransferase system (glucose-PTS). Interacts with the transcriptional repressor Mlc, preventing its interaction with DNA and leading to the modulation of expression of genes regulated by Mlc, including ptsG, which encodes the PTS system glucose-specific EIICB component. In terms of biological role, shows zinc-dependent metallopeptidase activity. This Salmonella agona (strain SL483) protein is Mlc titration factor A.